The sequence spans 131 residues: DNA-binding protein inhibitor ID-4 (131 aa).

Positions 36 to 88 (ARYKMEEEETLCLQYDMNDCYSRLKRLVPTIPPNKKVSKVEILQHVIDYILDL) constitute a bHLH domain.

In terms of assembly, heterodimer with other HLH proteins. As to expression, during embryonic development, expressed in a number of neural tissues, including Rohon-Beard neurons, olfactory placode, eye primordia, and the trigeminal ganglia. Also expressed in other organs including the pronephros and liver primordium. Pronephric development begins by stage 25 and increases during tailbud stages. Expressed in both the tubules and the duct. As embryogenesis progresses, expressed in the migrating melanocytes and lateral line structures.

The protein resides in the nucleus. Transcriptional regulator (lacking a basic DNA binding domain) which negatively regulates the basic helix-loop-helix (bHLH) transcription factors by forming heterodimers and inhibiting their DNA binding and transcriptional activity. Inhibits the activity of both neurogenic (neurog1/neurogenin, neurod1/neuroD) and myogenic (myod1/myoD) bHLH factors. This chain is DNA-binding protein inhibitor ID-4, found in Xenopus laevis (African clawed frog).